An 813-amino-acid chain; its full sequence is Leucine--tRNA ligase (813 aa).

Residues 42–52 carry the 'HIGH' region motif; it reads PYTSGNLHIGH. The 'KMSKS' region motif lies at 580–584; that stretch reads KMSKS. Lysine 583 contributes to the ATP binding site.

Belongs to the class-I aminoacyl-tRNA synthetase family.

It is found in the cytoplasm. The enzyme catalyses tRNA(Leu) + L-leucine + ATP = L-leucyl-tRNA(Leu) + AMP + diphosphate. This is Leucine--tRNA ligase from Dehalococcoides mccartyi (strain ATCC BAA-2100 / JCM 16839 / KCTC 5957 / BAV1).